We begin with the raw amino-acid sequence, 640 residues long: Threonine--tRNA ligase (640 aa).

One can recognise a TGS domain in the interval 1-61 (MPIITLPNGD…TEDSTLQIIT (61 aa)). Positions 242-533 (DHRKIGKALD…LIEHYAGFMP (292 aa)) are catalytic. Positions 333, 384, and 510 each coordinate Zn(2+).

The protein belongs to the class-II aminoacyl-tRNA synthetase family. Homodimer. Requires Zn(2+) as cofactor.

The protein localises to the cytoplasm. It carries out the reaction tRNA(Thr) + L-threonine + ATP = L-threonyl-tRNA(Thr) + AMP + diphosphate + H(+). Catalyzes the attachment of threonine to tRNA(Thr) in a two-step reaction: L-threonine is first activated by ATP to form Thr-AMP and then transferred to the acceptor end of tRNA(Thr). Also edits incorrectly charged L-seryl-tRNA(Thr). The sequence is that of Threonine--tRNA ligase from Acinetobacter baumannii (strain AB0057).